Reading from the N-terminus, the 318-residue chain is Thioredoxin reductase (318 aa).

36 to 43 (TGMQQGGQ) lines the FAD pocket. A disulfide bond links Cys-136 and Cys-139. 286-295 (DVMDHNYRQA) contacts FAD.

The protein belongs to the class-II pyridine nucleotide-disulfide oxidoreductase family. As to quaternary structure, homodimer. Requires FAD as cofactor.

The protein resides in the cytoplasm. The enzyme catalyses [thioredoxin]-dithiol + NADP(+) = [thioredoxin]-disulfide + NADPH + H(+). The protein is Thioredoxin reductase (trxB) of Vibrio cholerae serotype O1 (strain ATCC 39315 / El Tor Inaba N16961).